We begin with the raw amino-acid sequence, 186 residues long: ATP synthase subunit b, chloroplastic (186 aa).

The helical transmembrane segment at 27-49 (LATNPINLSVVLGVLIFFGKGVL) threads the bilayer.

The protein belongs to the ATPase B chain family. F-type ATPases have 2 components, F(1) - the catalytic core - and F(0) - the membrane proton channel. F(1) has five subunits: alpha(3), beta(3), gamma(1), delta(1), epsilon(1). F(0) has four main subunits: a(1), b(1), b'(1) and c(10-14). The alpha and beta chains form an alternating ring which encloses part of the gamma chain. F(1) is attached to F(0) by a central stalk formed by the gamma and epsilon chains, while a peripheral stalk is formed by the delta, b and b' chains.

It localises to the plastid. It is found in the chloroplast thylakoid membrane. Its function is as follows. F(1)F(0) ATP synthase produces ATP from ADP in the presence of a proton or sodium gradient. F-type ATPases consist of two structural domains, F(1) containing the extramembraneous catalytic core and F(0) containing the membrane proton channel, linked together by a central stalk and a peripheral stalk. During catalysis, ATP synthesis in the catalytic domain of F(1) is coupled via a rotary mechanism of the central stalk subunits to proton translocation. In terms of biological role, component of the F(0) channel, it forms part of the peripheral stalk, linking F(1) to F(0). This is ATP synthase subunit b, chloroplastic from Illicium oligandrum (Star anise).